Reading from the N-terminus, the 236-residue chain is MTRRYWNIHLEEMMEAGVHFGHGTRKWNPRMAPYISAKRKGIHIINLTRTARFLSEACDLVFDAATRGKQFLIVGTKNKAADSVARAATRTRCHYVNKKWLGGMLTNWSTTETRLHKFRDLRTEQKTGGLNRLPKRDAAMFKRQLSHLQTYLGGIKYMTGLPDIVIIVDQQEEYRALQECITLGIPTICLIDTNCDPDLADISIPANDDAIASIRLILNKLVFAISEGRSSSIRNS.

The protein belongs to the universal ribosomal protein uS2 family.

It localises to the plastid. It is found in the chloroplast. The polypeptide is Small ribosomal subunit protein uS2c (rps2) (Cucumis sativus (Cucumber)).